A 441-amino-acid polypeptide reads, in one-letter code: Ribosomal protein uS12 methylthiotransferase RimO (441 aa).

In terms of domain architecture, MTTase N-terminal spans 8–118 (PKIGFVSLGC…VLQHVHHYVP (111 aa)). 6 residues coordinate [4Fe-4S] cluster: Cys-17, Cys-53, Cys-82, Cys-150, Cys-154, and Cys-157. In terms of domain architecture, Radical SAM core spans 136–373 (LTPRHYAYLK…MQLQQQISAE (238 aa)). Residues 376–441 (QEKVGREILV…DEYDLWGSRV (66 aa)) enclose the TRAM domain.

The protein belongs to the methylthiotransferase family. RimO subfamily. Requires [4Fe-4S] cluster as cofactor.

The protein resides in the cytoplasm. It carries out the reaction L-aspartate(89)-[ribosomal protein uS12]-hydrogen + (sulfur carrier)-SH + AH2 + 2 S-adenosyl-L-methionine = 3-methylsulfanyl-L-aspartate(89)-[ribosomal protein uS12]-hydrogen + (sulfur carrier)-H + 5'-deoxyadenosine + L-methionine + A + S-adenosyl-L-homocysteine + 2 H(+). Functionally, catalyzes the methylthiolation of an aspartic acid residue of ribosomal protein uS12. The chain is Ribosomal protein uS12 methylthiotransferase RimO from Salmonella arizonae (strain ATCC BAA-731 / CDC346-86 / RSK2980).